The primary structure comprises 248 residues: 2,3-bisphosphoglycerate-dependent phosphoglycerate mutase (248 aa).

Substrate contacts are provided by residues 8–15 (RHGESEWN), 21–22 (TG), R60, 87–90 (ERHY), K98, 114–115 (RR), and 183–184 (GN). The active-site Tele-phosphohistidine intermediate is the H9. E87 functions as the Proton donor/acceptor in the catalytic mechanism.

The protein belongs to the phosphoglycerate mutase family. BPG-dependent PGAM subfamily.

It carries out the reaction (2R)-2-phosphoglycerate = (2R)-3-phosphoglycerate. Its pathway is carbohydrate degradation; glycolysis; pyruvate from D-glyceraldehyde 3-phosphate: step 3/5. In terms of biological role, catalyzes the interconversion of 2-phosphoglycerate and 3-phosphoglycerate. In Coprothermobacter proteolyticus (strain ATCC 35245 / DSM 5265 / OCM 4 / BT), this protein is 2,3-bisphosphoglycerate-dependent phosphoglycerate mutase.